The sequence spans 192 residues: Protein hunchback (192 aa).

Disordered regions lie at residues 16–54 (SHHH…SNTN) and 152–192 (LTPP…KYMA). A compositionally biased stretch (basic residues) spans 17–28 (HHHHHHHAHHSH). Over residues 32–41 (SNSNASSPHQ) the composition is skewed to low complexity. Positions 173–192 (EPEKEHDLMSNSSEDMKYMA) are enriched in basic and acidic residues.

Belongs to the hunchback C2H2-type zinc-finger protein family.

It localises to the nucleus. Gap class segmentation protein that controls development of head structures. This chain is Protein hunchback (hb), found in Drosophila tanythrix (Fruit fly).